Consider the following 529-residue polypeptide: Ectonucleoside triphosphate diphosphohydrolase 3 (529 aa).

Residues 1 to 22 (MFTVMTRQPCEQAGFRALSRTP) are Cytoplasmic-facing. A helical membrane pass occupies residues 23-43 (AIVTLVVLLVSIVVLVTLTLI). The Extracellular portion of the chain corresponds to 44 to 485 (QIRHPQVLPP…PLIHLPIQPP (442 aa)). The N-linked (GlcNAc...) asparagine glycan is linked to asparagine 81. Cysteine 92 and cysteine 116 are oxidised to a cystine. Asparagine 149 carries N-linked (GlcNAc...) asparagine glycosylation. Residue glutamate 182 is the Proton acceptor of the active site. 222–226 (GASTQ) contributes to the ATP binding site. 3 N-linked (GlcNAc...) asparagine glycosylation sites follow: asparagine 238, asparagine 284, and asparagine 318. Intrachain disulfides connect cysteine 261–cysteine 308, cysteine 289–cysteine 334, and cysteine 347–cysteine 353. Residues asparagine 381 and asparagine 392 are each glycosylated (N-linked (GlcNAc...) asparagine). Cysteine 399 and cysteine 422 form a disulfide bridge. Residue asparagine 454 is glycosylated (N-linked (GlcNAc...) asparagine). Residues 486 to 506 (VFMGVLAFFTAIALLCLAFLL) form a helical membrane-spanning segment. Residues 507 to 529 (YLCSSFRTKERSENAFDQAVDSD) are Cytoplasmic-facing.

Belongs to the GDA1/CD39 NTPase family. Ca(2+) serves as cofactor. Mg(2+) is required as a cofactor.

Its subcellular location is the cell membrane. The catalysed reaction is a ribonucleoside 5'-triphosphate + 2 H2O = a ribonucleoside 5'-phosphate + 2 phosphate + 2 H(+). In terms of biological role, catalyzes the hydrolysis of nucleoside triphosphates and diphosphates. Has a threefold preference for the hydrolysis of ATP and UTP over ADP and UDP. This chain is Ectonucleoside triphosphate diphosphohydrolase 3, found in Mus musculus (Mouse).